The primary structure comprises 147 residues: UPF0306 protein YhbP (147 aa).

Belongs to the UPF0306 family.

This chain is UPF0306 protein YhbP, found in Shigella sonnei (strain Ss046).